Reading from the N-terminus, the 33-residue chain is Cytochrome b6-f complex subunit 8 (33 aa).

The chain crosses the membrane as a helical span at residues 2 to 22 (LFTLAWASLAAVFSFSIAMVV).

The protein belongs to the PetN family. In terms of assembly, the 4 large subunits of the cytochrome b6-f complex are cytochrome b6, subunit IV (17 kDa polypeptide, PetD), cytochrome f and the Rieske protein, while the 4 small subunits are PetG, PetL, PetM and PetN. The complex functions as a dimer.

It localises to the cellular thylakoid membrane. Functionally, component of the cytochrome b6-f complex, which mediates electron transfer between photosystem II (PSII) and photosystem I (PSI), cyclic electron flow around PSI, and state transitions. This is Cytochrome b6-f complex subunit 8 from Prochlorococcus marinus (strain MIT 9303).